The primary structure comprises 340 residues: tRNA N6-adenosine threonylcarbamoyltransferase (340 aa).

Fe cation-binding residues include histidine 111 and histidine 115. Residues 134 to 138, aspartate 167, glycine 180, and asparagine 276 contribute to the substrate site; that span reads LVSGG. Aspartate 304 serves as a coordination point for Fe cation.

This sequence belongs to the KAE1 / TsaD family. Fe(2+) serves as cofactor.

It is found in the cytoplasm. The enzyme catalyses L-threonylcarbamoyladenylate + adenosine(37) in tRNA = N(6)-L-threonylcarbamoyladenosine(37) in tRNA + AMP + H(+). Required for the formation of a threonylcarbamoyl group on adenosine at position 37 (t(6)A37) in tRNAs that read codons beginning with adenine. Is involved in the transfer of the threonylcarbamoyl moiety of threonylcarbamoyl-AMP (TC-AMP) to the N6 group of A37, together with TsaE and TsaB. TsaD likely plays a direct catalytic role in this reaction. In Helicobacter pylori (strain Shi470), this protein is tRNA N6-adenosine threonylcarbamoyltransferase.